The primary structure comprises 259 residues: Phosphatidylserine decarboxylase proenzyme (259 aa).

Active-site charge relay system; for autoendoproteolytic cleavage activity residues include D86, H142, and S226. The Schiff-base intermediate with substrate; via pyruvic acid; for decarboxylase activity role is filled by S226. S226 is modified (pyruvic acid (Ser); by autocatalysis).

Belongs to the phosphatidylserine decarboxylase family. PSD-B subfamily. Prokaryotic type I sub-subfamily. As to quaternary structure, heterodimer of a large membrane-associated beta subunit and a small pyruvoyl-containing alpha subunit. Pyruvate serves as cofactor. Is synthesized initially as an inactive proenzyme. Formation of the active enzyme involves a self-maturation process in which the active site pyruvoyl group is generated from an internal serine residue via an autocatalytic post-translational modification. Two non-identical subunits are generated from the proenzyme in this reaction, and the pyruvate is formed at the N-terminus of the alpha chain, which is derived from the carboxyl end of the proenzyme. The autoendoproteolytic cleavage occurs by a canonical serine protease mechanism, in which the side chain hydroxyl group of the serine supplies its oxygen atom to form the C-terminus of the beta chain, while the remainder of the serine residue undergoes an oxidative deamination to produce ammonia and the pyruvoyl prosthetic group on the alpha chain. During this reaction, the Ser that is part of the protease active site of the proenzyme becomes the pyruvoyl prosthetic group, which constitutes an essential element of the active site of the mature decarboxylase.

The protein resides in the cell membrane. It catalyses the reaction a 1,2-diacyl-sn-glycero-3-phospho-L-serine + H(+) = a 1,2-diacyl-sn-glycero-3-phosphoethanolamine + CO2. It participates in phospholipid metabolism; phosphatidylethanolamine biosynthesis; phosphatidylethanolamine from CDP-diacylglycerol: step 2/2. Its function is as follows. Catalyzes the formation of phosphatidylethanolamine (PtdEtn) from phosphatidylserine (PtdSer). The chain is Phosphatidylserine decarboxylase proenzyme from Geobacillus sp. (strain WCH70).